Here is a 423-residue protein sequence, read N- to C-terminus: tRNA(Ile)-lysidine synthase (423 aa).

29–34 (SGGKDS) serves as a coordination point for ATP.

This sequence belongs to the tRNA(Ile)-lysidine synthase family.

Its subcellular location is the cytoplasm. It carries out the reaction cytidine(34) in tRNA(Ile2) + L-lysine + ATP = lysidine(34) in tRNA(Ile2) + AMP + diphosphate + H(+). In terms of biological role, ligates lysine onto the cytidine present at position 34 of the AUA codon-specific tRNA(Ile) that contains the anticodon CAU, in an ATP-dependent manner. Cytidine is converted to lysidine, thus changing the amino acid specificity of the tRNA from methionine to isoleucine. The sequence is that of tRNA(Ile)-lysidine synthase from Lactococcus lactis subsp. lactis (strain IL1403) (Streptococcus lactis).